Here is a 194-residue protein sequence, read N- to C-terminus: uncharacterized protein (194 aa).

2 CBS domains span residues 13–72 (MSFP…PKDV) and 78–133 (MSKK…LLEI). Residues 159–192 (YINGICENCGYQGRVRLYQGRYLCDECIEEFEEK) form the ACP-type MB domain. Residues cysteine 164, cysteine 167, cysteine 182, and cysteine 185 each contribute to the Fe cation site. Positions 164, 167, 182, and 185 each coordinate Zn(2+).

This is an uncharacterized protein from Methanocaldococcus jannaschii (strain ATCC 43067 / DSM 2661 / JAL-1 / JCM 10045 / NBRC 100440) (Methanococcus jannaschii).